Here is a 232-residue protein sequence, read N- to C-terminus: Phosphatidylserine decarboxylase proenzyme (232 aa).

S190 functions as the Schiff-base intermediate with substrate; via pyruvic acid in the catalytic mechanism. A Pyruvic acid (Ser); by autocatalysis modification is found at S190.

Belongs to the phosphatidylserine decarboxylase family. PSD-A subfamily. In terms of assembly, heterodimer of a large membrane-associated beta subunit and a small pyruvoyl-containing alpha subunit. Pyruvate is required as a cofactor. Post-translationally, is synthesized initially as an inactive proenzyme. Formation of the active enzyme involves a self-maturation process in which the active site pyruvoyl group is generated from an internal serine residue via an autocatalytic post-translational modification. Two non-identical subunits are generated from the proenzyme in this reaction, and the pyruvate is formed at the N-terminus of the alpha chain, which is derived from the carboxyl end of the proenzyme. The post-translation cleavage follows an unusual pathway, termed non-hydrolytic serinolysis, in which the side chain hydroxyl group of the serine supplies its oxygen atom to form the C-terminus of the beta chain, while the remainder of the serine residue undergoes an oxidative deamination to produce ammonia and the pyruvoyl prosthetic group on the alpha chain.

The protein resides in the cell membrane. It catalyses the reaction a 1,2-diacyl-sn-glycero-3-phospho-L-serine + H(+) = a 1,2-diacyl-sn-glycero-3-phosphoethanolamine + CO2. The protein operates within phospholipid metabolism; phosphatidylethanolamine biosynthesis; phosphatidylethanolamine from CDP-diacylglycerol: step 2/2. Functionally, catalyzes the formation of phosphatidylethanolamine (PtdEtn) from phosphatidylserine (PtdSer). The chain is Phosphatidylserine decarboxylase proenzyme from Rhodopseudomonas palustris (strain BisA53).